We begin with the raw amino-acid sequence, 373 residues long: 3 beta-hydroxysteroid dehydrogenase/Delta 5--&gt;4-isomerase type 1 (373 aa).

NADP(+)-binding positions include Gly-10–Leu-15, Tyr-155, and Lys-159. Lys-159 functions as the Proton donor in the catalytic mechanism. Residues Leu-288–Val-308 traverse the membrane as a helical segment.

Belongs to the 3-beta-HSD family. Adrenal glands, testes and ovaries.

It is found in the endoplasmic reticulum membrane. The protein resides in the mitochondrion membrane. The catalysed reaction is a 3beta-hydroxy-Delta(5)-steroid + NAD(+) = a 3-oxo-Delta(5)-steroid + NADH + H(+). The enzyme catalyses pregnenolone + NAD(+) = pregn-5-ene-3,20-dione + NADH + H(+). It catalyses the reaction 3beta-hydroxyandrost-5-en-17-one + NAD(+) = androst-5-ene-3,17-dione + NADH + H(+). It carries out the reaction androst-5-en-3beta,17beta-diol + NAD(+) = 17beta-hydroxy-androst-5-en-3-one + NADH + H(+). The catalysed reaction is a 3beta-hydroxysteroid + NADP(+) = a 3-oxosteroid + NADPH + H(+). The enzyme catalyses 5alpha-androstane-3beta,17beta-diol + NADP(+) = 17beta-hydroxy-5alpha-androstan-3-one + NADPH + H(+). It catalyses the reaction 3beta-hydroxy-5alpha-androstan-17-one + NADP(+) = 5alpha-androstan-3,17-dione + NADPH + H(+). It carries out the reaction a 3-oxo-Delta(5)-steroid = a 3-oxo-Delta(4)-steroid. The catalysed reaction is pregn-5-ene-3,20-dione = progesterone. The enzyme catalyses androst-5-ene-3,17-dione = androst-4-ene-3,17-dione. It catalyses the reaction 17beta-hydroxy-androst-5-en-3-one = testosterone. It carries out the reaction 5alpha-androstane-3beta,17beta-diol + NAD(+) = 17beta-hydroxy-5alpha-androstan-3-one + NADH + H(+). It participates in steroid hormone biosynthesis. It functions in the pathway steroid metabolism. Its function is as follows. A bifunctional enzyme responsible for the oxidation and isomerization of 3beta-hydroxy-Delta(5)-steroid precursors to 3-oxo-Delta(4)-steroids, an essential step in steroid hormone biosynthesis. Specifically catalyzes the conversion of pregnenolone to progesterone, 17alpha-hydroxypregnenolone to 17alpha-hydroxyprogesterone, dehydroepiandrosterone (DHEA) to 4-androstenedione and androstenediol to testosterone. Additionally, catalyzes the interconversion between 3beta-hydroxy and 3-oxo-5alpha-androstane steroids controlling the bioavalability of the active forms. Specifically converts dihydrotestosterone to its inactive form 5alpha-androstanediol, that does not bind androgen receptor/AR. Also converts androstanedione, a precursor of testosterone and estrone, to epiandrosterone. Expected to use NAD(+) as preferred electron donor for the 3beta-hydroxy-steroid dehydrogenase activity and NADPH for the 3-ketosteroid reductase activity. The protein is 3 beta-hydroxysteroid dehydrogenase/Delta 5--&gt;4-isomerase type 1 (HSD3B1) of Macaca mulatta (Rhesus macaque).